We begin with the raw amino-acid sequence, 296 residues long: Glycine and tyrosine-rich protein (296 aa).

Residues 1–18 form the signal peptide; that stretch reads MKVLVTALIISFSTAVLT. The tract at residues 157-280 is disordered; it reads MESRLRPQAT…NQPEETPAPN (124 aa). Low complexity predominate over residues 172–264; the sequence is TGGQPSTGGK…STGGQPSTGG (93 aa).

Component of the acid-insoluble and acid-soluble organic matrix of calcified layers of the shell (at protein level).

The protein resides in the secreted. This chain is Glycine and tyrosine-rich protein, found in Lottia gigantea (Giant owl limpet).